The following is a 256-amino-acid chain: Short chain dehydrogenase adrF (256 aa).

I11, D57, R119, Y151, K155, and V184 together coordinate NADP(+). Residue Y151 is the Proton acceptor of the active site. K155 acts as the Lowers pKa of active site Tyr in catalysis.

It belongs to the short-chain dehydrogenases/reductases (SDR) family.

It participates in secondary metabolite biosynthesis; terpenoid biosynthesis. In terms of biological role, short chain dehydrogenase; part of the gene cluster that mediates the biosynthesis of andrastins, meroterpenoid compounds that exhibit inhibitory activity against ras farnesyltransferase, suggesting that they could be promising leads for antitumor agents. The first step of the pathway is the synthesis of 3,5-dimethylorsellinic acid (DMOA) by the polyketide synthase adrD via condensation of one acetyl-CoA starter unit with 3 malonyl-CoA units and 2 methylations. DMAO is then converted to farnesyl-DMAO by the prenyltransferase adrG. The methyltransferase adrK catalyzes the methylation of the carboxyl group of farnesyl-DMAO to farnesyl-DMAO methyl ester which is further converted to epoxyfarnesyl-DMAO methyl ester by the FAD-dependent monooxygenase adrH. The terpene cyclase adrI then catalyzes the carbon skeletal rearrangement to generate the andrastin E, the first compound in the pathway having the andrastin scaffold, with the tetracyclic ring system. The post-cyclization tailoring enzymes adrF, adrE, adrJ, and adrA, are involved in the conversion of andrastin E into andrastin A. The short chain dehydrogenase adrF is responsible for the oxidation of the C-3 a hydroxyl group of andrastin E to yield the corresponding ketone, andrastin D. The ketoreductase adrE stereoselectively reduces the carbonyl moiety to reverse the stereochemistry of the C-3 position to yield andrastin F. The acetyltransferase adrJ is the acetyltransferase that attaches the acetyl group to the C-3 hydroxyl group of andrastin F to yield andrastin C. Finally, the cytochrome P450 monooxygenase adrA catalyzes two sequential oxidation reactions of the C-23 methyl group, to generate the corresponding alcohol andrastin B, and aldehyde andrastin A. The polypeptide is Short chain dehydrogenase adrF (Penicillium roqueforti).